The chain runs to 427 residues: Enolase (427 aa).

Q163 contributes to the (2R)-2-phosphoglycerate binding site. E205 (proton donor) is an active-site residue. Mg(2+)-binding residues include D242, E285, and D312. K337, R366, S367, and K388 together coordinate (2R)-2-phosphoglycerate. Residue K337 is the Proton acceptor of the active site.

This sequence belongs to the enolase family. Mg(2+) is required as a cofactor.

The protein localises to the cytoplasm. It localises to the secreted. It is found in the cell surface. The enzyme catalyses (2R)-2-phosphoglycerate = phosphoenolpyruvate + H2O. It functions in the pathway carbohydrate degradation; glycolysis; pyruvate from D-glyceraldehyde 3-phosphate: step 4/5. Its function is as follows. Catalyzes the reversible conversion of 2-phosphoglycerate (2-PG) into phosphoenolpyruvate (PEP). It is essential for the degradation of carbohydrates via glycolysis. This is Enolase from Beijerinckia indica subsp. indica (strain ATCC 9039 / DSM 1715 / NCIMB 8712).